A 508-amino-acid polypeptide reads, in one-letter code: RanBP-type and C3HC4-type zinc finger-containing protein 1 (508 aa).

Met-1 is modified (N-acetylmethionine). The tract at residues 1 to 218 (MDEKTKKAEE…PGCEMCCRAR (218 aa)) is interaction with IRF3. The segment at 1–268 (MDEKTKKAEE…NYLQHVQLEQ (268 aa)) is interaction with TAB2. Position 50 is a phosphoserine (Ser-50). Residues 55 to 119 (IRLCVSVEDA…DQETLHSHGI (65 aa)) form the Ubiquitin-like domain. Residues 69 to 131 (VTIWLTVRPD…NGDSAYLYLL (63 aa)) are interaction with RNF31. The disordered stretch occupies residues 161-191 (TLQPRGPLEPVLPKPRTHQETGQPDAAPESP). The segment at 188-220 (PESPPVGWQCPGCTFINKPTRPGCEMCCRARPE) adopts a RanBP2-type zinc-finger fold. The stretch at 231–260 (DEEERARLAGEEEALRQYEQRKQQQQEGNY) forms a coiled coil. Residues 276–504 (EPAECPVCYS…VNGIPCHPSC (229 aa)) are TRIAD supradomain. 7 residues coordinate Zn(2+): Cys-280, Cys-283, Cys-298, His-300, Cys-303, Cys-306, and Cys-321. The segment at 280-330 (CPVCYSVLAPGEAVVLRECLHTFCRECLQGTIRNSQEAEVSCPFIDNTYSC) adopts an RING-type 1 zinc-finger fold. Residue Tyr-328 is modified to Phosphotyrosine. Cys-330, Cys-369, Cys-374, Cys-389, Cys-392, Cys-397, Cys-400, His-404, Cys-409, Cys-445, and Cys-448 together coordinate Zn(2+). The segment at 349–409 (QRFLDLGVSI…CKAIHERMNC (61 aa)) adopts an IBR-type zinc-finger fold. The segment at 445–474 (CPQCRIVVQKKDGCDWIRCTVCHTEICWVT) adopts an RING-type 2; atypical zinc-finger fold. The active site involves Cys-458. Zn(2+) is bound by residues Cys-463 and Cys-466.

Belongs to the RBR family. Component of the LUBAC complex (linear ubiquitin chain assembly complex) which consists of SHARPIN, RBCK1 and RNF31. LUBAC has a MW of approximately 600 kDa suggesting a heteromultimeric assembly of its subunits. Interacts with beta-I-type (PRKCB1) and zeta-type protein kinase C (PRKCZ). Interacts with UBE2L3. Interacts with IREB2 only in iron-rich conditions. Associates with the TNF-R1 signaling complex (TNF-RSC) in a stimulation-dependent manner. Interacts with EYA1, TAB2, TAB3, MAP3K7 TRAF6 and RIPK1. Interacts with IRF3. Post-translationally, auto-ubiquitinated. Auto-ubiquitination leads to degradation by the proteasome. Phosphorylated. In vitro, phosphorylation inhibits auto-ubiquitination activity. In terms of tissue distribution, widely expressed.

It carries out the reaction [E2 ubiquitin-conjugating enzyme]-S-ubiquitinyl-L-cysteine + [acceptor protein]-L-lysine = [E2 ubiquitin-conjugating enzyme]-L-cysteine + [acceptor protein]-N(6)-ubiquitinyl-L-lysine.. It participates in protein modification; protein ubiquitination. E3 ubiquitin-protein ligase, which accepts ubiquitin from specific E2 ubiquitin-conjugating enzymes, such as UBE2L3/UBCM4, and then transfers it to substrates. Functions as an E3 ligase for oxidized IREB2 and both heme and oxygen are necessary for IREB2 ubiquitination. Promotes ubiquitination of TAB2 and IRF3 and their degradation by the proteasome. Component of the LUBAC complex which conjugates linear ('Met-1'-linked) polyubiquitin chains to substrates and plays a key role in NF-kappa-B activation and regulation of inflammation. LUBAC conjugates linear polyubiquitin to IKBKG and RIPK1 and is involved in activation of the canonical NF-kappa-B and the JNK signaling pathways. Linear ubiquitination mediated by the LUBAC complex interferes with TNF-induced cell death and thereby prevents inflammation. LUBAC is recruited to the TNF-R1 signaling complex (TNF-RSC) following polyubiquitination of TNF-RSC components by BIRC2 and/or BIRC3 and to conjugate linear polyubiquitin to IKBKG and possibly other components contributing to the stability of the complex. The LUBAC complex is also involved in innate immunity by conjugating linear polyubiquitin chains at the surface of bacteria invading the cytosol to form the ubiquitin coat surrounding bacteria. LUBAC is not able to initiate formation of the bacterial ubiquitin coat, and can only promote formation of linear polyubiquitins on pre-existing ubiquitin. The bacterial ubiquitin coat acts as an 'eat-me' signal for xenophagy and promotes NF-kappa-B activation. Together with OTULIN, the LUBAC complex regulates the canonical Wnt signaling during angiogenesis. Binds polyubiquitin of different linkage types. This chain is RanBP-type and C3HC4-type zinc finger-containing protein 1 (Rbck1), found in Rattus norvegicus (Rat).